The sequence spans 169 residues: Crossover junction endodeoxyribonuclease RuvC (169 aa).

Residues D11, E71, and D143 contribute to the active site. Mg(2+) is bound by residues D11, E71, and D143.

It belongs to the RuvC family. Homodimer which binds Holliday junction (HJ) DNA. The HJ becomes 2-fold symmetrical on binding to RuvC with unstacked arms; it has a different conformation from HJ DNA in complex with RuvA. In the full resolvosome a probable DNA-RuvA(4)-RuvB(12)-RuvC(2) complex forms which resolves the HJ. It depends on Mg(2+) as a cofactor.

It localises to the cytoplasm. It carries out the reaction Endonucleolytic cleavage at a junction such as a reciprocal single-stranded crossover between two homologous DNA duplexes (Holliday junction).. The RuvA-RuvB-RuvC complex processes Holliday junction (HJ) DNA during genetic recombination and DNA repair. Endonuclease that resolves HJ intermediates. Cleaves cruciform DNA by making single-stranded nicks across the HJ at symmetrical positions within the homologous arms, yielding a 5'-phosphate and a 3'-hydroxyl group; requires a central core of homology in the junction. The consensus cleavage sequence is 5'-(A/T)TT(C/G)-3'. Cleavage occurs on the 3'-side of the TT dinucleotide at the point of strand exchange. HJ branch migration catalyzed by RuvA-RuvB allows RuvC to scan DNA until it finds its consensus sequence, where it cleaves and resolves the cruciform DNA. The sequence is that of Crossover junction endodeoxyribonuclease RuvC from Rhizobium etli (strain ATCC 51251 / DSM 11541 / JCM 21823 / NBRC 15573 / CFN 42).